A 970-amino-acid polypeptide reads, in one-letter code: Protein bicaudal C homolog 1-B (970 aa).

The segment at 1–50 is disordered; sequence MAAQCGGYMNQSDPGSNSERSADSPLPGSEDDSPGSAAPHDPEWREERFR. Over residues 9–19 the composition is skewed to polar residues; the sequence is MNQSDPGSNSE. The span at 40 to 50 shows a compositional bias: basic and acidic residues; that stretch reads HDPEWREERFR. KH domains are found at residues 130-197 and 282-346; these read RVTL…RVRI and PVST…RQYL. The span at 596 to 605 shows a compositional bias: polar residues; sequence EASRQSNNHS. Disordered regions lie at residues 596–638, 677–696, and 773–841; these read EASR…SANT, SDSEMSPTEGPMTDKKAPGS, and RRAN…NKSA. Residues 606 to 616 are compositionally biased toward basic and acidic residues; that stretch reads SAEEVNSKTDS. 2 stretches are compositionally biased toward polar residues: residues 783 to 810 and 819 to 831; these read TMSTTYENSPMSLSRSNSREQLGNGSDS and IDSSHNDYSSSIG. One can recognise an SAM domain in the interval 869–932; it reads FKGSDLPELF…LLAISELNKN (64 aa).

It belongs to the BicC family.

Its function is as follows. Putative RNA-binding protein. May be involved in regulating gene expression during embryonic development. Seems to be involved in endoderm formation. Ectopic expression results in endoderm formation in the absence of mesoderm induction. This Xenopus laevis (African clawed frog) protein is Protein bicaudal C homolog 1-B (bicc1-b).